The primary structure comprises 412 residues: Kelch repeat-containing protein At1g19470 (412 aa).

Positions 1 to 55 (MVNISEIPDDSNDGCDPNKKPEEQVLRRSRRIATRNENQNKKPKEEEEEDNRSVS) are disordered. Over residues 16 to 26 (DPNKKPEEQVL) the composition is skewed to basic and acidic residues. 4 Kelch repeats span residues 156–202 (EMYV…VVDG), 203–250 (KIYV…SAHA), 255–291 (KLYM…WDKT), and 292–345 (CCVV…EMAN).

The protein is Kelch repeat-containing protein At1g19470 of Arabidopsis thaliana (Mouse-ear cress).